An 854-amino-acid chain; its full sequence is Protein unc-33 (854 aa).

Disordered regions lie at residues Glu-57–Pro-114, Glu-130–Gly-327, and Val-794–Trp-854. 2 stretches are compositionally biased toward polar residues: residues Thr-58–Gly-68 and Arg-75–Arg-97. Positions Lys-193–Pro-202 are enriched in basic and acidic residues. Residues Val-240 to Gln-257 show a composition bias toward acidic residues. Residues His-279 to Asn-298 show a composition bias toward basic and acidic residues. Over residues Ser-802–Asn-811 the composition is skewed to polar residues. Residues Asn-816–Val-827 show a composition bias toward basic and acidic residues.

This sequence belongs to the metallo-dependent hydrolases superfamily. Hydantoinase/dihydropyrimidinase family. In terms of assembly, isoform a: Probable monomer. Isoform b: Probable homodimer. Isoform c: Probable homodimer. Probable heterodimer composed of isoform b and isoform c. Interacts with unc-14 and kinesin-1 motor complex light chain klc-1; both interactions regulate unc-33 neurite localization. Interacts with fln-1 (via calponin-homology (CH) domains and filamin repeat 18-19). Isoform c: Interacts with vab-8 isoform a. In terms of tissue distribution, expressed in ventral cord and nerve ring (at protein level). Isoform a: Expressed in nerve ring (at protein level). Expressed in the nervous system, two amphid socket cells and weakly in non-neuronal pharyngeal cells.

It localises to the cell projection. The protein resides in the axon. It is found in the dendrite. In terms of biological role, during neurogenesis, plays an essential role in axonal guidance and outgrowth by regulating the polarization of both microtubule and actin cytoskeletons. Establishes the asymmetry of axonal and dendrite microtubules and the polarized sorting of neuronal proteins. This is achieved in part by regulating the localization of kinesin-like protein unc-104. In neurons without a distal microtubule-organizing center (MTOC), also controls the organization of microtubules in dendrites. During the dorso-ventral axonal guidance and outgrowth of VD neurons, required downstream of Rac GTPases ced-10 and mig-2 to inhibit growth cone filopodial protrusion mediated by the unc-6/netrin receptor unc-40-unc-5. Specifically, regulates growth cone filopodial protrusion polarity, and thus migration, by promoting F-actin polarization and by restricting plus-end microtubule accumulation in the growth cone. Probably downstream of mab-20/Sema2a and mab-20 receptor plx-2, regulates the guidance of DD/VD neuron axons by modulating fln-1 interaction with F-actin which results in the remodeling of the actin cytoskeleton. In hermaphrodites, involved in sex myoblast (SM) migration by regulating the gonad-dependent repulsion of SMs. Functionally, in neurons, required for the polarized sorting of axonal proteins. In PLM neuron, regulates innexin unc-9 gap junction turnover by suppressing unc-9 transport out of gap junctions. Plays a role in locomotion and egg-laying. Its function is as follows. In PLM neuron, regulates innexin unc-9 gap junction turnover by suppressing unc-9 transport out of gap junctions. The protein is Protein unc-33 of Caenorhabditis elegans.